A 131-amino-acid chain; its full sequence is Small ribosomal subunit protein uS8 (131 aa).

Belongs to the universal ribosomal protein uS8 family. In terms of assembly, part of the 30S ribosomal subunit. Contacts proteins S5 and S12.

One of the primary rRNA binding proteins, it binds directly to 16S rRNA central domain where it helps coordinate assembly of the platform of the 30S subunit. The protein is Small ribosomal subunit protein uS8 of Phocaeicola vulgatus (strain ATCC 8482 / DSM 1447 / JCM 5826 / CCUG 4940 / NBRC 14291 / NCTC 11154) (Bacteroides vulgatus).